The primary structure comprises 351 residues: Probable V-type proton ATPase subunit d (351 aa).

This sequence belongs to the V-ATPase V0D/AC39 subunit family. In terms of assembly, V-ATPase is a heteromultimeric enzyme composed of a peripheral catalytic V1 complex (components A to H) attached to an integral membrane V0 proton pore complex (components: a, c, c', c'' and d).

Its function is as follows. Subunit of the integral membrane V0 complex of vacuolar ATPase. Vacuolar ATPase is responsible for acidifying a variety of intracellular compartments in eukaryotic cells, thus providing most of the energy required for transport processes in the vacuolar system. This chain is Probable V-type proton ATPase subunit d, found in Oryza sativa subsp. japonica (Rice).